Here is a 334-residue protein sequence, read N- to C-terminus: Putative transport protein MJ1177 (334 aa).

The next 7 helical transmembrane spans lie at 13–33 (VIVG…DVLA), 61–81 (LAIS…LLTF), 138–158 (IIDV…TFYF), 191–211 (SYKN…ILSY), 234–254 (LLPI…FFLI), 259–279 (KAVF…DFVI), and 293–313 (VLVV…GFAI).

It belongs to the autoinducer-2 exporter (AI-2E) (TC 2.A.86) family.

The protein resides in the cell membrane. The sequence is that of Putative transport protein MJ1177 from Methanocaldococcus jannaschii (strain ATCC 43067 / DSM 2661 / JAL-1 / JCM 10045 / NBRC 100440) (Methanococcus jannaschii).